The chain runs to 264 residues: Thymidylate synthase (264 aa).

Position 21 (arginine 21) interacts with dUMP. A (6R)-5,10-methylene-5,6,7,8-tetrahydrofolate-binding site is contributed by histidine 51. 126–127 (RR) lines the dUMP pocket. Residue cysteine 146 is the Nucleophile of the active site. DUMP contacts are provided by residues 166 to 169 (RSAD), asparagine 177, and 207 to 209 (HLY). Aspartate 169 contributes to the (6R)-5,10-methylene-5,6,7,8-tetrahydrofolate binding site. Alanine 263 is a (6R)-5,10-methylene-5,6,7,8-tetrahydrofolate binding site.

The protein belongs to the thymidylate synthase family. Bacterial-type ThyA subfamily. As to quaternary structure, homodimer.

The protein resides in the cytoplasm. It carries out the reaction dUMP + (6R)-5,10-methylene-5,6,7,8-tetrahydrofolate = 7,8-dihydrofolate + dTMP. It participates in pyrimidine metabolism; dTTP biosynthesis. In terms of biological role, catalyzes the reductive methylation of 2'-deoxyuridine-5'-monophosphate (dUMP) to 2'-deoxythymidine-5'-monophosphate (dTMP) while utilizing 5,10-methylenetetrahydrofolate (mTHF) as the methyl donor and reductant in the reaction, yielding dihydrofolate (DHF) as a by-product. This enzymatic reaction provides an intracellular de novo source of dTMP, an essential precursor for DNA biosynthesis. This is Thymidylate synthase from Azotobacter vinelandii (strain DJ / ATCC BAA-1303).